A 331-amino-acid chain; its full sequence is UDP-GalNAc:beta-1,3-N-acetylgalactosaminyltransferase 1 (331 aa).

Topologically, residues 1–20 are cytoplasmic; the sequence is MASALWTVLPSRMSLRSLQW. The chain crosses the membrane as a helical; Signal-anchor for type II membrane protein span at residues 21–43; that stretch reads SLLLLSLLSFLVMWYLSLPHYNV. The Lumenal portion of the chain corresponds to 44 to 331; the sequence is IERVNWMYFY…VMLRNTTCHY (288 aa). 5 N-linked (GlcNAc...) asparagine glycosylation sites follow: Asn72, Asn154, Asn198, Asn212, and Asn326.

This sequence belongs to the glycosyltransferase 31 family. Mg(2+) is required as a cofactor.

The protein resides in the golgi apparatus membrane. The catalysed reaction is a globoside Gb3Cer (d18:1(4E)) + UDP-N-acetyl-alpha-D-galactosamine = a globoside Gb4Cer (d18:1(4E)) + UDP + H(+). It participates in protein modification; protein glycosylation. Functionally, transfers N-acetylgalactosamine onto globotriaosylceramide. Plays a critical role in preimplantation stage embryonic development. This is UDP-GalNAc:beta-1,3-N-acetylgalactosaminyltransferase 1 (B3GALNT1) from Pongo abelii (Sumatran orangutan).